The sequence spans 439 residues: Nitroalkane oxidase (439 aa).

Residues 131–134 (LMHS), 139–141 (TAN), 169–171 (WPS), arginine 304, 313–314 (HQ), 375–379 (KAVGM), and 400–404 (LFDGG) each bind FAD. Residue aspartate 402 is the Proton acceptor of the active site.

It belongs to the acyl-CoA dehydrogenase family. In terms of assembly, homotetramer. Requires FAD as cofactor.

The catalysed reaction is a primary nitroalkane + O2 + H2O = an aldehyde + nitrite + H2O2 + H(+). It catalyses the reaction a secondary nitroalkane + O2 + H2O = a ketone + nitrite + H2O2 + H(+). Its activity is regulated as follows. Strongly inhibited by mercury chloride and KCN. Its function is as follows. Catalyzes the oxidative denitrification of neutral nitroalkanes, including 3-nitro-2-pentanol, 1-nitropropane, 2-nitropropane, nitroethane and nitrocyclohexane, and may thereby protect the organism against toxic compounds. Has no detectable acyl-CoA dehydrogenase activity. This Fusarium oxysporum (Fusarium vascular wilt) protein is Nitroalkane oxidase.